The following is a 147-amino-acid chain: uncharacterized protein (147 aa).

Belongs to the limonene-1,2-epoxide hydrolase family.

This is an uncharacterized protein from Bacillus subtilis (strain 168).